Reading from the N-terminus, the 77-residue chain is Putative snRNP Sm-like protein (77 aa).

The Sm domain occupies 8 to 77; the sequence is PTLRMMLDYV…DSVVVITPAA (70 aa).

This sequence belongs to the snRNP Sm proteins family.

In Aeropyrum pernix (strain ATCC 700893 / DSM 11879 / JCM 9820 / NBRC 100138 / K1), this protein is Putative snRNP Sm-like protein.